The primary structure comprises 372 residues: E3 ubiquitin-protein ligase RNF34 (372 aa).

The segment at 56-107 (EGPNIVCKACGLSFSVFRKKHVCCDCKKDFCSVCSVLQENLRRCSTCHLLQE) adopts an FYVE-type zinc-finger fold. Positions 115–134 (LMRLKVKDLRQYLILRNIPT) constitute an SAP 1 domain. At Ser169 the chain carries Phosphoserine. The tract at residues 194-252 (QGELMDGDQTSRSGVPAQVQSEITSANTEDDDDDDDEDDDDEEENAEDQNPGLSKERVR) is disordered. Over residues 201 to 220 (DQTSRSGVPAQVQSEITSAN) the composition is skewed to polar residues. Acidic residues predominate over residues 221–240 (TEDDDDDDDEDDDDEEENAE). A phosphoserine mark is found at Ser254 and Ser256. One can recognise an SAP 2 domain in the interval 264-278 (VEGMSVRQLKEILAR). The RING-type zinc finger occupies 325 to 360 (CRICMDAVIDCVLLECGHMVTCTKCGKRMSECPICR).

In terms of assembly, interacts with CASP8 and CASP10. Interacts with p53/TP53; involved in p53/TP53 ubiquitination. Interacts (via RING-type zinc finger) with MDM2; the interaction stabilizes MDM2. Interacts (via RING-type zinc finger) with PPARGC1A. Interacts with NOD1. In terms of processing, autoubiquitinated (in vitro). Proteolytically cleaved by caspases upon induction of apoptosis by TNF.

It localises to the cell membrane. The protein resides in the endomembrane system. The protein localises to the nucleus. It is found in the nucleus speckle. Its subcellular location is the cytoplasm. It localises to the cytosol. The enzyme catalyses S-ubiquitinyl-[E2 ubiquitin-conjugating enzyme]-L-cysteine + [acceptor protein]-L-lysine = [E2 ubiquitin-conjugating enzyme]-L-cysteine + N(6)-ubiquitinyl-[acceptor protein]-L-lysine.. The protein operates within protein modification; protein ubiquitination. E3 ubiquitin-protein ligase that regulates several biological processes through the ubiquitin-mediated proteasomal degradation of various target proteins. Ubiquitinates the caspases CASP8 and CASP10, promoting their proteasomal degradation, to negatively regulate cell death downstream of death domain receptors in the extrinsic pathway of apoptosis. May mediate 'Lys-48'-linked polyubiquitination of RIPK1 and its subsequent proteasomal degradation thereby indirectly regulating the tumor necrosis factor-mediated signaling pathway. Negatively regulates p53/TP53 through its direct ubiquitination and targeting to proteasomal degradation. Indirectly, may also negatively regulate p53/TP53 through ubiquitination and degradation of SFN. Mediates PPARGC1A proteasomal degradation probably through ubiquitination thereby indirectly regulating the metabolism of brown fat cells. Possibly involved in innate immunity, through 'Lys-48'-linked polyubiquitination of NOD1 and its subsequent proteasomal degradation. The chain is E3 ubiquitin-protein ligase RNF34 (RNF34) from Pongo abelii (Sumatran orangutan).